The primary structure comprises 368 residues: Polymerase delta-interacting protein 2 (368 aa).

A mitochondrion-targeting transit peptide spans 1–21 (MAGCVARRALAVGSRWWSRSL). Residues 235–360 (RETTENIRVT…FSLESNKDEK (126 aa)) form the ApaG domain. T292 is modified (phosphothreonine).

As to quaternary structure, interacts with PCNA and POLD2. Interacts with SSBP1. Interacts with PRIMPOL; leading to enhance DNA polymerase activity of PRIMPOL. Interacts with POLH. Interacts with POLD1; leading to stimulate DNA polymerase activity of POLD1.

The protein localises to the mitochondrion matrix. It localises to the nucleus. In terms of biological role, involved in DNA damage tolerance by regulating translesion synthesis (TLS) of templates carrying DNA damage lesions such as 8oxoG and abasic sites. May act by stimulating activity of DNA polymerases involved in TLS, such as PRIMPOL and polymerase delta (POLD1). In Mus musculus (Mouse), this protein is Polymerase delta-interacting protein 2.